A 208-amino-acid polypeptide reads, in one-letter code: Small ribosomal subunit protein uS4 (208 aa).

The region spanning 98-161 (RRLDNVVYRM…KSNPQVVRAM (64 aa)) is the S4 RNA-binding domain.

It belongs to the universal ribosomal protein uS4 family. As to quaternary structure, part of the 30S ribosomal subunit. Contacts protein S5. The interaction surface between S4 and S5 is involved in control of translational fidelity.

Functionally, one of the primary rRNA binding proteins, it binds directly to 16S rRNA where it nucleates assembly of the body of the 30S subunit. With S5 and S12 plays an important role in translational accuracy. The polypeptide is Small ribosomal subunit protein uS4 (Helicobacter acinonychis (strain Sheeba)).